Reading from the N-terminus, the 121-residue chain is Large ribosomal subunit protein uL22 (121 aa).

Belongs to the universal ribosomal protein uL22 family. In terms of assembly, part of the 50S ribosomal subunit.

Its function is as follows. This protein binds specifically to 23S rRNA; its binding is stimulated by other ribosomal proteins, e.g. L4, L17, and L20. It is important during the early stages of 50S assembly. It makes multiple contacts with different domains of the 23S rRNA in the assembled 50S subunit and ribosome. Functionally, the globular domain of the protein is located near the polypeptide exit tunnel on the outside of the subunit, while an extended beta-hairpin is found that lines the wall of the exit tunnel in the center of the 70S ribosome. This is Large ribosomal subunit protein uL22 from Synechococcus sp. (strain CC9311).